Consider the following 360-residue polypeptide: MSWQNNLRSVSPYIAGEQPELTDIIKLNTNENPYPPTSVAQLFNERYKTKNLRLYPSTDAKSLRKKLADYHHLEVEQVIIGNGSDEVLSLSFLTFFNSQSPLLMPDITYSFYPIYCELYRIPFQKVPVDDDFKVLIKDYCIENGGIVIANPDAPTALALNLKDIEEILKKNQNSIVLINEAYIDFGGETCLPLLKKYDNLVVVQTFSKSRSLAGIRLGVAYGSAEAISHLYDVKNSFNSYPIDSLAQIIGEASLMDEHYFQKNIQKIIKTREVFKDNLVNLGFEVTDSKANFVFVHHPKVKAEELFKALYEAKIIVRHWNQPRIDDWLRITIGTNKEMNKVIEFLKGYLKKNEEIDEWKK.

Lys-208 is subject to N6-(pyridoxal phosphate)lysine.

The protein belongs to the class-II pyridoxal-phosphate-dependent aminotransferase family. Histidinol-phosphate aminotransferase subfamily. Homodimer. Pyridoxal 5'-phosphate serves as cofactor.

The catalysed reaction is L-histidinol phosphate + 2-oxoglutarate = 3-(imidazol-4-yl)-2-oxopropyl phosphate + L-glutamate. It participates in amino-acid biosynthesis; L-histidine biosynthesis; L-histidine from 5-phospho-alpha-D-ribose 1-diphosphate: step 7/9. The polypeptide is Histidinol-phosphate aminotransferase (hisC) (Lactococcus lactis subsp. lactis (strain IL1403) (Streptococcus lactis)).